The sequence spans 314 residues: Electron transfer flavoprotein subunit alpha (314 aa).

253–281 (LYVAVGISGAIQHLAGMKDSKVIVAINKD) lines the FAD pocket.

It belongs to the ETF alpha-subunit/FixB family. As to quaternary structure, heterodimer of an alpha and a beta subunit. It depends on FAD as a cofactor.

In terms of biological role, the electron transfer flavoprotein serves as a specific electron acceptor for other dehydrogenases. It transfers the electrons to the main respiratory chain via ETF-ubiquinone oxidoreductase (ETF dehydrogenase). This chain is Electron transfer flavoprotein subunit alpha (etfA), found in Bradyrhizobium diazoefficiens (strain JCM 10833 / BCRC 13528 / IAM 13628 / NBRC 14792 / USDA 110).